The following is a 358-amino-acid chain: UDP-N-acetylglucosamine--N-acetylmuramyl-(pentapeptide) pyrophosphoryl-undecaprenol N-acetylglucosamine transferase (358 aa).

Residues 11 to 13, arginine 163, serine 191, isoleucine 245, and glutamine 290 each bind UDP-N-acetyl-alpha-D-glucosamine; that span reads TGG.

It belongs to the glycosyltransferase 28 family. MurG subfamily.

The protein localises to the cell inner membrane. The enzyme catalyses di-trans,octa-cis-undecaprenyl diphospho-N-acetyl-alpha-D-muramoyl-L-alanyl-D-glutamyl-meso-2,6-diaminopimeloyl-D-alanyl-D-alanine + UDP-N-acetyl-alpha-D-glucosamine = di-trans,octa-cis-undecaprenyl diphospho-[N-acetyl-alpha-D-glucosaminyl-(1-&gt;4)]-N-acetyl-alpha-D-muramoyl-L-alanyl-D-glutamyl-meso-2,6-diaminopimeloyl-D-alanyl-D-alanine + UDP + H(+). It participates in cell wall biogenesis; peptidoglycan biosynthesis. Functionally, cell wall formation. Catalyzes the transfer of a GlcNAc subunit on undecaprenyl-pyrophosphoryl-MurNAc-pentapeptide (lipid intermediate I) to form undecaprenyl-pyrophosphoryl-MurNAc-(pentapeptide)GlcNAc (lipid intermediate II). This is UDP-N-acetylglucosamine--N-acetylmuramyl-(pentapeptide) pyrophosphoryl-undecaprenol N-acetylglucosamine transferase from Janthinobacterium sp. (strain Marseille) (Minibacterium massiliensis).